The following is a 361-amino-acid chain: Mitochondrial import receptor subunit TOM40 homolog (361 aa).

The tract at residues 1–73 is disordered; it reads MGNVLAASSP…GAAAASEDGS (73 aa). The span at 11–36 shows a compositional bias: pro residues; sequence PAGPPPPPTPSLVGLPPPPPSPPGFT. Residues 40–50 show a composition bias toward gly residues; it reads LGGGLGTGSST. Positions 51-69 are enriched in low complexity; the sequence is GRGSERTPGAAASGAAAAS.

It belongs to the Tom40 family. In terms of assembly, forms part of the preprotein translocase complex of the outer mitochondrial membrane (TOM complex) which consists of at least 7 different proteins (TOMM5, TOMM6, TOMM7, TOMM20, TOMM22, TOMM40 and TOMM70). Interacts with mitochondrial targeting sequences. Interacts with TIMM29; linking the TIM22 complex to the TOM complex. Forms a complex with BCAP31 (via C-terminus) which mediates the translocation of components of the mitochondrial membrane respiratory chain NADH dehydrogenase (Complex I) from the cytosol to the mitochondria. Interacts (via N-terminus) with CYP1A1 (via mitochondrial targeting signal); this interaction is required for CYP1A1 translocation across the mitochondrial outer membrane.

It localises to the mitochondrion outer membrane. Channel-forming protein essential for import of protein precursors into mitochondria. Plays a role in the assembly of the mitochondrial membrane respiratory chain NADH dehydrogenase (Complex I) by forming a complex with BCAP31 and mediating the translocation of Complex I components from the cytosol to the mitochondria. In Mus musculus (Mouse), this protein is Mitochondrial import receptor subunit TOM40 homolog (Tomm40).